A 160-amino-acid polypeptide reads, in one-letter code: Cytochrome b6-f complex subunit 4 (160 aa).

Transmembrane regions (helical) follow at residues 36–56 (LLYMFPVVILGTLSCITGLAV), 95–115 (LLGVLLMAAVPAGLLTVPFIE), and 131–151 (TVFLIGTVVAIWLGIGATLPI).

The protein belongs to the cytochrome b family. PetD subfamily. As to quaternary structure, the 4 large subunits of the cytochrome b6-f complex are cytochrome b6, subunit IV (17 kDa polypeptide, petD), cytochrome f and the Rieske protein, while the 4 small subunits are petG, petL, petM and petN. The complex functions as a dimer.

It is found in the plastid. The protein resides in the chloroplast thylakoid membrane. Its function is as follows. Component of the cytochrome b6-f complex, which mediates electron transfer between photosystem II (PSII) and photosystem I (PSI), cyclic electron flow around PSI, and state transitions. The protein is Cytochrome b6-f complex subunit 4 of Nephroselmis olivacea (Green alga).